The sequence spans 695 residues: Serotransferrin (695 aa).

A signal peptide spans 1-19; sequence MRLAAGALLACAALGLCLA. Transferrin-like domains lie at 25–347 and 361–680; these read VRWC…NLRE and VKWC…NLRK. Disulfide bonds link C28-C67 and C38-C58. The residue at position 42 (R42) is a Dimethylated arginine. Fe(3+)-binding residues include D82 and Y114. 17 disulfide bridges follow: C137–C213, C156–C350, C177–C193, C180–C196, C190–C198, C246–C260, C358–C612, C364–C396, C374–C387, C421–C690, C436–C653, C468–C539, C492–C681, C502–C516, C513–C522, C579–C593, and C631–C636. Positions 139, 143, 145, and 146 each coordinate hydrogencarbonate. Fe(3+) is bound at residue Y207. Fe(3+) is bound at residue H268. S389 carries the phosphoserine modification. D411 and Y444 together coordinate Fe(3+). The hydrogencarbonate site is built by T470, R474, A476, and G477. Residue N509 is glycosylated (N-linked (GlcNAc...) asparagine). A Fe(3+)-binding site is contributed by Y533. H601 provides a ligand contact to Fe(3+). S682 bears the Phosphoserine mark.

The protein belongs to the transferrin family. In terms of assembly, monomer. Part of a complex composed of SLC40A1/ferroportin, TF/transferrin and HEPH/hephaestin that transfers iron from cells to transferrin. In terms of tissue distribution, expressed by the liver and secreted in plasma.

The protein resides in the secreted. Transferrins are iron binding transport proteins which can bind two Fe(3+) ions in association with the binding of an anion, usually bicarbonate. It is responsible for the transport of iron from sites of absorption and heme degradation to those of storage and utilization. Serum transferrin may also have a further role in stimulating cell proliferation. The sequence is that of Serotransferrin (TF) from Oryctolagus cuniculus (Rabbit).